An 865-amino-acid chain; its full sequence is Outer membrane usher protein HtrE (865 aa).

Residues 1–29 (MTIEYTKNYHHLTRIATFCALLYCNTAFS) form the signal peptide. Cysteine 838 and cysteine 862 form a disulfide bridge.

It belongs to the fimbrial export usher family.

It localises to the cell outer membrane. Part of the yadCKLM-htrE-yadVN fimbrial operon. Could contribute to adhesion to various surfaces in specific environmental niches. Probably involved in the export and assembly of fimbrial subunits across the outer membrane. In Escherichia coli (strain K12), this protein is Outer membrane usher protein HtrE (htrE).